Reading from the N-terminus, the 304-residue chain is Ornithine carbamoyltransferase (304 aa).

Residues 47–50 (STRT), Arg98, and 125–128 (HPCQ) contribute to the carbamoyl phosphate site. Residues Asn156, Asp221, and 225–226 (SM) contribute to the L-ornithine site. Carbamoyl phosphate contacts are provided by residues 262–263 (CL) and Arg290.

This sequence belongs to the aspartate/ornithine carbamoyltransferase superfamily. OTCase family.

The protein resides in the cytoplasm. The enzyme catalyses carbamoyl phosphate + L-ornithine = L-citrulline + phosphate + H(+). Its pathway is amino-acid biosynthesis; L-arginine biosynthesis; L-arginine from L-ornithine and carbamoyl phosphate: step 1/3. Its function is as follows. Reversibly catalyzes the transfer of the carbamoyl group from carbamoyl phosphate (CP) to the N(epsilon) atom of ornithine (ORN) to produce L-citrulline. This chain is Ornithine carbamoyltransferase, found in Methanococcus maripaludis (strain C7 / ATCC BAA-1331).